The chain runs to 32 residues: MNKGELVDAVMAKATVTKKQADAFILALDIVA.

This sequence belongs to the bacterial histone-like protein family.

Histone-like DNA-binding protein which is capable of wrapping DNA to stabilize it, and thus to prevent its denaturation under extreme environmental conditions. The chain is DNA-binding protein HU (hup) from Synechocystis sp. (strain PCC 6701).